A 509-amino-acid chain; its full sequence is 2,3-bisphosphoglycerate-independent phosphoglycerate mutase (509 aa).

D11 lines the Mn(2+) pocket. Y35 carries the phosphotyrosine modification. Residue S61 participates in Mn(2+) binding. S61 acts as the Phosphoserine intermediate in catalysis. Residues H122, 152–153 (RD), R184, R190, 260–263 (RPDR), and K335 each bind substrate. Mn(2+)-binding residues include D402, H406, D443, H444, and H461.

This sequence belongs to the BPG-independent phosphoglycerate mutase family. In terms of assembly, monomer. Mn(2+) serves as cofactor.

The catalysed reaction is (2R)-2-phosphoglycerate = (2R)-3-phosphoglycerate. Its pathway is carbohydrate degradation; glycolysis; pyruvate from D-glyceraldehyde 3-phosphate: step 3/5. Essential for rapid growth and for sporulation. Catalyzes the interconversion of 2-phosphoglycerate and 3-phosphoglycerate. This Bacillus cereus (strain ATCC 14579 / DSM 31 / CCUG 7414 / JCM 2152 / NBRC 15305 / NCIMB 9373 / NCTC 2599 / NRRL B-3711) protein is 2,3-bisphosphoglycerate-independent phosphoglycerate mutase.